Reading from the N-terminus, the 195-residue chain is Guanylate kinase (195 aa).

Residues 7–186 (GVLLVLSSPS…SVEEISSILD (180 aa)) enclose the Guanylate kinase-like domain. An ATP-binding site is contributed by 14–21 (SPSGAGKT).

This sequence belongs to the guanylate kinase family.

It is found in the cytoplasm. The catalysed reaction is GMP + ATP = GDP + ADP. Essential for recycling GMP and indirectly, cGMP. The protein is Guanylate kinase of Wolbachia sp. subsp. Brugia malayi (strain TRS).